Consider the following 247-residue polypeptide: Neurotrophic factor BDNF precursor form (247 aa).

A signal peptide spans 1-18 (MTILFLTMVISYFGCMKA). The propeptide occupies 19 to 128 (APMKEANVRG…AANMSMRVRR (110 aa)). The N-linked (GlcNAc...) asparagine glycan is linked to Asn121. Intrachain disulfides connect Cys141-Cys208, Cys186-Cys237, and Cys196-Cys239.

The protein belongs to the NGF-beta family. Monomers and homodimers. Binds to NTRK2/TRKB. Can form heterodimers with other neurotrophin family members, such as NTF3 and NTF4 (in vitro), but the physiological relevance of this is not clear. BDNF precursor form: interacts with the heterodimer formed by NGFR and SORCS2. Mature BDNF has much lower affinity for the heterodimer formed by NGFR and SORCS2. In terms of processing, N-glycosylated and glycosulfated, contrary to mature BDNF. Post-translationally, mature BDNF is produced by proteolytic removal of the propeptide, catalyzed by a FURIN family member. In addition, the precursor form is proteolytically cleaved within the propeptide, but this is not an obligatory intermediate for the production of mature BDNF. Can be converted into mature BDNF by plasmin (PLG).

It localises to the secreted. In terms of biological role, important signaling molecule that activates signaling cascades downstream of NTRK2. During development, promotes the survival and differentiation of selected neuronal populations of the peripheral and central nervous systems. Participates in axonal growth, pathfinding and in the modulation of dendritic growth and morphology. Major regulator of synaptic transmission and plasticity at adult synapses in many regions of the CNS. The versatility of BDNF is emphasized by its contribution to a range of adaptive neuronal responses including long-term potentiation (LTP), long-term depression (LTD), certain forms of short-term synaptic plasticity, as well as homeostatic regulation of intrinsic neuronal excitability. Important signaling molecule that activates signaling cascades downstream of NTRK2. Activates signaling cascades via the heterodimeric receptor formed by NGFR and SORCS2. Signaling via NGFR and SORCS2 plays a role in synaptic plasticity and long-term depression (LTD). Binding to NGFR and SORCS2 promotes neuronal apoptosis. Promotes neuronal growth cone collapse. The sequence is that of Neurotrophic factor BDNF precursor form (BDNF) from Ursus arctos (Brown bear).